A 199-amino-acid chain; its full sequence is FMN-dependent NADH:quinone oxidoreductase 1 (199 aa).

FMN is bound by residues S10, 17–19, and 87–90; these read SNS and MYNF.

Belongs to the azoreductase type 1 family. As to quaternary structure, homodimer. The cofactor is FMN.

The enzyme catalyses 2 a quinone + NADH + H(+) = 2 a 1,4-benzosemiquinone + NAD(+). It catalyses the reaction N,N-dimethyl-1,4-phenylenediamine + anthranilate + 2 NAD(+) = 2-(4-dimethylaminophenyl)diazenylbenzoate + 2 NADH + 2 H(+). In terms of biological role, quinone reductase that provides resistance to thiol-specific stress caused by electrophilic quinones. Also exhibits azoreductase activity. Catalyzes the reductive cleavage of the azo bond in aromatic azo compounds to the corresponding amines. This is FMN-dependent NADH:quinone oxidoreductase 1 from Mesoplasma florum (strain ATCC 33453 / NBRC 100688 / NCTC 11704 / L1) (Acholeplasma florum).